The chain runs to 101 residues: C-X-C motif chemokine 3 (101 aa).

The first 32 residues, 1–32, serve as a signal peptide directing secretion; sequence MAPPTRRLLNAALLLLLLLMATSHQPSGTVVA. Disulfide bonds link cysteine 37/cysteine 63 and cysteine 39/cysteine 79.

It belongs to the intercrine alpha (chemokine CxC) family.

Its subcellular location is the secreted. Its function is as follows. Ligand for CXCR2. Has chemotactic activity for neutrophils. May play a role in inflammation and exert its effects on endothelial cells in an autocrine fashion. The polypeptide is C-X-C motif chemokine 3 (Cxcl3) (Rattus norvegicus (Rat)).